The primary structure comprises 209 residues: ATP phosphoribosyltransferase (209 aa).

The protein belongs to the ATP phosphoribosyltransferase family. Short subfamily. As to quaternary structure, heteromultimer composed of HisG and HisZ subunits.

The protein localises to the cytoplasm. It carries out the reaction 1-(5-phospho-beta-D-ribosyl)-ATP + diphosphate = 5-phospho-alpha-D-ribose 1-diphosphate + ATP. Its pathway is amino-acid biosynthesis; L-histidine biosynthesis; L-histidine from 5-phospho-alpha-D-ribose 1-diphosphate: step 1/9. Catalyzes the condensation of ATP and 5-phosphoribose 1-diphosphate to form N'-(5'-phosphoribosyl)-ATP (PR-ATP). Has a crucial role in the pathway because the rate of histidine biosynthesis seems to be controlled primarily by regulation of HisG enzymatic activity. This is ATP phosphoribosyltransferase from Caldicellulosiruptor bescii (strain ATCC BAA-1888 / DSM 6725 / KCTC 15123 / Z-1320) (Anaerocellum thermophilum).